The sequence spans 213 residues: Thiopurine S-methyltransferase (213 aa).

4 residues coordinate S-adenosyl-L-methionine: W10, L45, E66, and R121.

It belongs to the class I-like SAM-binding methyltransferase superfamily. TPMT family.

The protein resides in the cytoplasm. It carries out the reaction S-adenosyl-L-methionine + a thiopurine = S-adenosyl-L-homocysteine + a thiopurine S-methylether.. This is Thiopurine S-methyltransferase from Aliivibrio salmonicida (strain LFI1238) (Vibrio salmonicida (strain LFI1238)).